Consider the following 204-residue polypeptide: Large ribosomal subunit protein uL4 (204 aa).

The segment at 49-74 is disordered; sequence AKKRGEVSGGGKKPWSQKGGGRARAG. A compositionally biased stretch (gly residues) spans 55–71; sequence VSGGGKKPWSQKGGGRA.

Belongs to the universal ribosomal protein uL4 family. In terms of assembly, part of the 50S ribosomal subunit.

Its function is as follows. One of the primary rRNA binding proteins, this protein initially binds near the 5'-end of the 23S rRNA. It is important during the early stages of 50S assembly. It makes multiple contacts with different domains of the 23S rRNA in the assembled 50S subunit and ribosome. Forms part of the polypeptide exit tunnel. The sequence is that of Large ribosomal subunit protein uL4 from Wolinella succinogenes (strain ATCC 29543 / DSM 1740 / CCUG 13145 / JCM 31913 / LMG 7466 / NCTC 11488 / FDC 602W) (Vibrio succinogenes).